The following is a 322-amino-acid chain: Protein-L-isoaspartate O-methyltransferase (322 aa).

The tract at residues 1 to 101 (MSGERAKRFP…AKQGDRSAAP (101 aa)) is disordered. Basic and acidic residues predominate over residues 14–29 (EDLKREPRKPEGRVAE). Composition is skewed to low complexity over residues 33-51 (AGDA…PAAA) and 67-91 (AANP…PQGG). Residue Ser170 is part of the active site.

The protein belongs to the methyltransferase superfamily. L-isoaspartyl/D-aspartyl protein methyltransferase family.

The protein resides in the cytoplasm. The catalysed reaction is [protein]-L-isoaspartate + S-adenosyl-L-methionine = [protein]-L-isoaspartate alpha-methyl ester + S-adenosyl-L-homocysteine. Its function is as follows. Catalyzes the methyl esterification of L-isoaspartyl residues in peptides and proteins that result from spontaneous decomposition of normal L-aspartyl and L-asparaginyl residues. It plays a role in the repair and/or degradation of damaged proteins. This is Protein-L-isoaspartate O-methyltransferase from Burkholderia pseudomallei (strain 668).